Consider the following 419-residue polypeptide: UDP-N-acetylglucosamine 1-carboxyvinyltransferase (419 aa).

Residue 22–23 participates in phosphoenolpyruvate binding; that stretch reads KN. UDP-N-acetyl-alpha-D-glucosamine is bound at residue R93. The active-site Proton donor is the C117. C117 carries the post-translational modification 2-(S-cysteinyl)pyruvic acid O-phosphothioketal. Positions 307 and 329 each coordinate UDP-N-acetyl-alpha-D-glucosamine.

This sequence belongs to the EPSP synthase family. MurA subfamily.

Its subcellular location is the cytoplasm. The enzyme catalyses phosphoenolpyruvate + UDP-N-acetyl-alpha-D-glucosamine = UDP-N-acetyl-3-O-(1-carboxyvinyl)-alpha-D-glucosamine + phosphate. It functions in the pathway cell wall biogenesis; peptidoglycan biosynthesis. Its function is as follows. Cell wall formation. Adds enolpyruvyl to UDP-N-acetylglucosamine. The polypeptide is UDP-N-acetylglucosamine 1-carboxyvinyltransferase (Shewanella woodyi (strain ATCC 51908 / MS32)).